The chain runs to 284 residues: Bifunctional protein FolD (284 aa).

NADP(+) is bound by residues 165–167, I190, and I231; that span reads GAS.

Belongs to the tetrahydrofolate dehydrogenase/cyclohydrolase family. As to quaternary structure, homodimer.

It catalyses the reaction (6R)-5,10-methylene-5,6,7,8-tetrahydrofolate + NADP(+) = (6R)-5,10-methenyltetrahydrofolate + NADPH. The enzyme catalyses (6R)-5,10-methenyltetrahydrofolate + H2O = (6R)-10-formyltetrahydrofolate + H(+). The protein operates within one-carbon metabolism; tetrahydrofolate interconversion. Its function is as follows. Catalyzes the oxidation of 5,10-methylenetetrahydrofolate to 5,10-methenyltetrahydrofolate and then the hydrolysis of 5,10-methenyltetrahydrofolate to 10-formyltetrahydrofolate. The sequence is that of Bifunctional protein FolD from Alkaliphilus metalliredigens (strain QYMF).